The following is a 165-amino-acid chain: Glycine cleavage system H protein, mitochondrial (165 aa).

The transit peptide at 1 to 31 directs the protein to the mitochondrion; it reads MALRIWASSTAKALRLSSASRPHFSPLFRCF. A Lipoyl-binding domain is found at 55-137; it reads VATIGITDHA…YEDGWMIKVK (83 aa). The residue at position 96 (K96) is an N6-lipoyllysine.

The protein belongs to the GcvH family. The glycine cleavage system is composed of four components that only loosely associate: the P protein (EC 1.4.4.2), the T protein (EC 2.1.2.10), the L protein (EC 1.8.1.4) and the lipoyl-bearing H protein. (R)-lipoate is required as a cofactor. Expressed in roots, stems and leaves.

It is found in the mitochondrion. Functionally, the glycine cleavage system catalyzes the degradation of glycine. The H protein shuttles the methylamine group of glycine from the P protein to the T protein. The sequence is that of Glycine cleavage system H protein, mitochondrial (GDCSH) from Flaveria trinervia (Clustered yellowtops).